A 68-amino-acid polypeptide reads, in one-letter code: Peptide TsPep3 (68 aa).

Residues 1 to 26 form the signal peptide; it reads MKLSCGFLLIFLVLSAMIATFSEVEA. Cystine bridges form between C30-C38, C33-C54, C37-C47, and C42-C52. A propeptide spanning residues 56–68 is cleaved from the precursor; that stretch reads GRSDLNEEFENYQ.

In terms of tissue distribution, expressed by the venom gland.

The protein localises to the secreted. Probable weak potassium channel blocker. The protein is Peptide TsPep3 of Tityus serrulatus (Brazilian scorpion).